The following is an 88-amino-acid chain: Large ribosomal subunit protein uL23c (88 aa).

The protein belongs to the universal ribosomal protein uL23 family. As to quaternary structure, part of the 50S ribosomal subunit.

It is found in the plastid. Its subcellular location is the chloroplast. Its function is as follows. Binds to 23S rRNA. This chain is Large ribosomal subunit protein uL23c (rpl23), found in Spirogyra maxima (Green alga).